The primary structure comprises 324 residues: Probable 6-phosphogluconolactonase 4, chloroplastic (324 aa).

Residues 1–63 constitute a chloroplast transit peptide; it reads MSVSAAVAAA…PAMATDGAAA (63 aa). Positions 19–43 are disordered; it reads ARHRSPPASRVAATSRGRPFSSGPH.

This sequence belongs to the glucosamine/galactosamine-6-phosphate isomerase family. 6-phosphogluconolactonase subfamily.

It is found in the plastid. The protein localises to the chloroplast. It catalyses the reaction 6-phospho-D-glucono-1,5-lactone + H2O = 6-phospho-D-gluconate + H(+). Its pathway is carbohydrate degradation; pentose phosphate pathway; D-ribulose 5-phosphate from D-glucose 6-phosphate (oxidative stage): step 2/3. In terms of biological role, hydrolysis of 6-phosphogluconolactone to 6-phosphogluconate. The sequence is that of Probable 6-phosphogluconolactonase 4, chloroplastic from Oryza sativa subsp. japonica (Rice).